We begin with the raw amino-acid sequence, 569 residues long: MASSCAVQVKLELGHRAQVRKKPTVEGFTHDWMVFVRGPEHSNIQHFVEKVVFHLHESFPRPKRVCKDPPYKVEESGYAGFILPIEVYFKNKEEPKKVRFDYDLFLHLEGHPPVNHLRCEKLTFNNPTEDFRRKLLKAGGDPNRSIHTSSSSSSSSSSSSSSSSSSSSSSSSSSSSSSSSSSSSSSSSSSTSFSKPHKLMKEHKEKPSKDSREHKSAFKEPSRDHNKSSKDSSKKPKENKPLKEEKIVPKMAFKEPKPMSKEPKADSNLLTVTSGQQDKKAPSKRPPASDSEELSAKKRKKSSSEALFKSFSSAPPLILTCSADKKQIKDKSHVKMGKVKIESETSEKKKSMLPPFDDIVDPNDSDVEENMSSKSDSEQPSPASSSSSSSSSFTPSQTRQQGPLRSIMKDLHSDDNEEESDEAEDNDNDSEMERPVNRGGSRSRRVSLSDGSDSESSSASSPLHHEPPPPLLKTNNNQILEVKSPIKQSKSDKQIKNGECDKAYLDELVELHRRLMTLRERHILQQIVNLIEETGHFHITNTTFDFDLCSLDKTTVRKLQSYLETSGTS.

The YEATS domain maps to 1 to 138 (MASSCAVQVK…EDFRRKLLKA (138 aa)). A disordered region spans residues 138 to 476 (AGGDPNRSIH…PPPPLLKTNN (339 aa)). The span at 149–190 (SSSSSSSSSSSSSSSSSSSSSSSSSSSSSSSSSSSSSSSSSS) shows a compositional bias: low complexity. A compositionally biased stretch (basic and acidic residues) spans 202–265 (EHKEKPSKDS…PKPMSKEPKA (64 aa)). Residues Ser-289 and Ser-295 each carry the phosphoserine modification. Positions 296 to 301 (AKKRKK) match the Nuclear localization signal motif. Low complexity predominate over residues 304–314 (SEALFKSFSSA). Basic and acidic residues predominate over residues 323–350 (ADKKQIKDKSHVKMGKVKIESETSEKKK). Lys-340 is covalently cross-linked (Glycyl lysine isopeptide (Lys-Gly) (interchain with G-Cter in SUMO2)). Residues 358 to 369 (DIVDPNDSDVEE) are compositionally biased toward acidic residues. The span at 372-396 (SSKSDSEQPSPASSSSSSSSSFTPS) shows a compositional bias: low complexity. Phosphoserine is present on residues Ser-413 and Ser-420. The segment covering 415 to 430 (DNEEESDEAEDNDNDS) has biased composition (acidic residues). Low complexity predominate over residues 446–462 (VSLSDGSDSESSSASSP). Ser-484 is subject to Phosphoserine.

As to quaternary structure, component of the super elongation complex (SEC), at least composed of EAF1, EAF2, CDK9, MLLT3/AF9, AFF (AFF1 or AFF4), the P-TEFb complex and ELL (ELL, ELL2 or ELL3). Interacts with BCOR. Interacts with CBX8. Interacts with ALKBH4. As to expression, ubiquitously expressed. Strong expression in the spleen.

It localises to the nucleus. Its subcellular location is the chromosome. Its function is as follows. Chromatin reader component of the super elongation complex (SEC), a complex required to increase the catalytic rate of RNA polymerase II transcription by suppressing transient pausing by the polymerase at multiple sites along the DNA. Specifically recognizes and binds acylated histone H3, with a preference for histone H3 that is crotonylated. Crotonylation marks active promoters and enhancers and confers resistance to transcriptional repressors. Recognizes and binds histone H3 crotonylated at 'Lys-9' (H3K9cr), and with slightly lower affinity histone H3 crotonylated at 'Lys-18' (H3K18cr). Also recognizes and binds histone H3 acetylated and butyrylated at 'Lys-9' (H3K9ac and H3K9bu, respectively), but with lower affinity than crotonylated histone H3. In the SEC complex, MLLT3 is required to recruit the complex to crotonylated histones. Recruitment of the SEC complex to crotonylated histones promotes recruitment of DOT1L on active chromatin to deposit histone H3 'Lys-79' methylation (H3K79me). Plays a key role in hematopoietic stem cell (HSC) maintenance by preserving, rather than conferring, HSC stemness. Acts by binding to the transcription start site of active genes in HSCs and sustaining level of H3K79me2, probably by recruiting DOT1L. The protein is Protein AF-9 (Mllt3) of Mus musculus (Mouse).